The following is a 64-amino-acid chain: DNA-directed RNA polymerase subunit omega (64 aa).

It belongs to the RNA polymerase subunit omega family. The RNAP catalytic core consists of 2 alpha, 1 beta, 1 beta' and 1 omega subunit. When a sigma factor is associated with the core the holoenzyme is formed, which can initiate transcription.

It carries out the reaction RNA(n) + a ribonucleoside 5'-triphosphate = RNA(n+1) + diphosphate. Functionally, promotes RNA polymerase assembly. Latches the N- and C-terminal regions of the beta' subunit thereby facilitating its interaction with the beta and alpha subunits. In Oceanobacillus iheyensis (strain DSM 14371 / CIP 107618 / JCM 11309 / KCTC 3954 / HTE831), this protein is DNA-directed RNA polymerase subunit omega.